Reading from the N-terminus, the 447-residue chain is Exodeoxyribonuclease 7 large subunit (447 aa).

The protein belongs to the XseA family. As to quaternary structure, heterooligomer composed of large and small subunits.

The protein localises to the cytoplasm. The catalysed reaction is Exonucleolytic cleavage in either 5'- to 3'- or 3'- to 5'-direction to yield nucleoside 5'-phosphates.. Bidirectionally degrades single-stranded DNA into large acid-insoluble oligonucleotides, which are then degraded further into small acid-soluble oligonucleotides. The protein is Exodeoxyribonuclease 7 large subunit of Lactobacillus helveticus (strain DPC 4571).